A 156-amino-acid chain; its full sequence is Small ribosomal subunit protein uS7 (156 aa).

This sequence belongs to the universal ribosomal protein uS7 family. Part of the 30S ribosomal subunit. Contacts proteins S9 and S11.

Its function is as follows. One of the primary rRNA binding proteins, it binds directly to 16S rRNA where it nucleates assembly of the head domain of the 30S subunit. Is located at the subunit interface close to the decoding center, probably blocks exit of the E-site tRNA. The polypeptide is Small ribosomal subunit protein uS7 (Clostridioides difficile (strain 630) (Peptoclostridium difficile)).